The chain runs to 123 residues: Small ribosomal subunit protein uS12cz/uS12cy (123 aa).

Belongs to the universal ribosomal protein uS12 family. As to quaternary structure, part of the 30S ribosomal subunit.

It is found in the plastid. The protein localises to the chloroplast. Functionally, with S4 and S5 plays an important role in translational accuracy. Located at the interface of the 30S and 50S subunits. The polypeptide is Small ribosomal subunit protein uS12cz/uS12cy (rps12-A) (Eucalyptus globulus subsp. globulus (Tasmanian blue gum)).